A 614-amino-acid chain; its full sequence is BPI fold-containing family B member 4 (614 aa).

Residues 1 to 18 (MWMAWCVAALSVVAVCGT) form the signal peptide. An N-linked (GlcNAc...) asparagine glycan is attached at N273. C295 and C332 are joined by a disulfide.

Belongs to the BPI/LBP/Plunc superfamily. BPI/LBP family. In terms of tissue distribution, expressed in nasal tissue.

Its subcellular location is the secreted. It localises to the cytoplasm. Its function is as follows. May have the capacity to recognize and bind specific classes of odorants. May act as a carrier molecule, transporting odorants across the mucus layer to access receptor sites. May serve as a primary defense mechanism by recognizing and removing potentially harmful odorants or pathogenic microorganisms from the mucosa or clearing excess odorant from mucus to enable new odorant stimuli to be received. In Homo sapiens (Human), this protein is BPI fold-containing family B member 4 (BPIFB4).